The sequence spans 129 residues: Large ribosomal subunit protein bL17 (129 aa).

The protein belongs to the bacterial ribosomal protein bL17 family. Part of the 50S ribosomal subunit. Contacts protein L32.

The protein is Large ribosomal subunit protein bL17 of Buchnera aphidicola subsp. Baizongia pistaciae (strain Bp).